The primary structure comprises 68 residues: MWFQDVRTLKEGLEFNGITLHLTSCQHGCILSRKELNDYVKKINIQMLKSHWMEKQSNYKYLFFNYIK.

This is an uncharacterized protein from Dictyostelium discoideum (Social amoeba).